The sequence spans 467 residues: tRNA modification GTPase MnmE (467 aa).

(6S)-5-formyl-5,6,7,8-tetrahydrofolate-binding residues include Arg25, Glu87, and Lys130. The TrmE-type G domain occupies 226-389; it reads GLSVVLAGQP…LRGELLRIAG (164 aa). Asn236 lines the K(+) pocket. Residues 236–241, 255–261, and 280–283 each bind GTP; these read NVGKSS, TPIAGTT, and DTAG. Residue Ser240 coordinates Mg(2+). 3 residues coordinate K(+): Thr255, Ile257, and Thr260. Thr261 provides a ligand contact to Mg(2+). Residue Lys467 participates in (6S)-5-formyl-5,6,7,8-tetrahydrofolate binding.

The protein belongs to the TRAFAC class TrmE-Era-EngA-EngB-Septin-like GTPase superfamily. TrmE GTPase family. In terms of assembly, homodimer. Heterotetramer of two MnmE and two MnmG subunits. K(+) is required as a cofactor.

Its subcellular location is the cytoplasm. Functionally, exhibits a very high intrinsic GTPase hydrolysis rate. Involved in the addition of a carboxymethylaminomethyl (cmnm) group at the wobble position (U34) of certain tRNAs, forming tRNA-cmnm(5)s(2)U34. This chain is tRNA modification GTPase MnmE, found in Burkholderia mallei (strain NCTC 10247).